The following is a 1224-amino-acid chain: Dynactin subunit 1 (1224 aa).

The segment covering 1–10 has biased composition (basic residues); the sequence is MAQSRRHPHG. Positions 1 to 30 are disordered; that stretch reads MAQSRRHPHGRASSAGPRMSTEASSKPLKV. Residues 49-91 form the CAP-Gly domain; the sequence is GATLXATGKWVGVILDEAKGKNDGTVQGRKYFTCEENHGIFVR. Disordered regions lie at residues 100–217, 374–402, and 888–918; these read DGAD…RSQV, SASEKQEHVKLQKQMEKKNTELESLRQQR, and PHCHHEQDATAMQEGEYDADRPQSKPTPPAE. Residues 117 to 146 are compositionally biased toward basic residues; it reads VPKRHSRXAAKGSKLRGAKPKKTTARRPKP. Over residues 148–180 the composition is skewed to low complexity; sequence RTPTSAPSSGTAGPSGSASASGGEMSSSEPSTP. The stretch at 205–540 forms a coiled coil; it reads SPTKEEENLR…QEASAEKQQQ (336 aa). Basic and acidic residues predominate over residues 207–217; the sequence is TKEEENLRSQV. Coiled-coil stretches lie at residues 936–1042 and 1081–1117; these read LKLE…EGLR and KDSPLLLQQIEALQLSIRHLKNENNRLKGAQMKLELA. The tract at residues 1203–1224 is disordered; the sequence is WCSSSRARASPPASACSPPRPS. Residues 1204–1224 are compositionally biased toward low complexity; it reads CSSSRARASPPASACSPPRPS.

It belongs to the dynactin 150 kDa subunit family. As to quaternary structure, monomer and homodimer. Subunit of dynactin, a multiprotein complex part of a tripartite complex with dynein and a adapter, such as BICDL1, BICD2 or HOOK3. The dynactin complex is built around ACTR1A/ACTB filament and consists of an actin-related filament composed of a shoulder domain, a pointed end and a barbed end. Its length is defined by its flexible shoulder domain. The soulder is composed of 2 DCTN1 subunits, 4 DCTN2 and 2 DCTN3. DCTN1/p150(glued) binds directly to microtubules and to cytoplasmic dynein. In terms of tissue distribution, ubiquitously expressed.

Its subcellular location is the cytoplasm. The protein resides in the cytoskeleton. The protein localises to the microtubule organizing center. It localises to the centrosome. It is found in the centriole. Its subcellular location is the spindle. The protein resides in the cell cortex. Part of the dynactin complex that activates the molecular motor dynein for ultra-processive transport along microtubules. Plays a key role in dynein-mediated retrograde transport of vesicles and organelles along microtubules by recruiting and tethering dynein to microtubules. Binds to both dynein and microtubules providing a link between specific cargos, microtubules and dynein. Essential for targeting dynein to microtubule plus ends, recruiting dynein to membranous cargos and enhancing dynein processivity (the ability to move along a microtubule for a long distance without falling off the track). Can also act as a brake to slow the dynein motor during motility along the microtubule. Can regulate microtubule stability by promoting microtubule formation, nucleation and polymerization and by inhibiting microtubule catastrophe in neurons. Inhibits microtubule catastrophe by binding both to microtubules and to tubulin, leading to enhanced microtubule stability along the axon. Plays a role in metaphase spindle orientation. Plays a role in centriole cohesion and subdistal appendage organization and function. Its recruitment to the centriole in a KIF3A-dependent manner is essential for the maintenance of centriole cohesion and the formation of subdistal appendage. Also required for microtubule anchoring at the mother centriole. Plays a role in primary cilia formation. This chain is Dynactin subunit 1 (DCTN1), found in Gallus gallus (Chicken).